The primary structure comprises 118 residues: Basic phospholipase A2 PA-15 (118 aa).

7 disulfide bridges follow: C11–C71, C27–C117, C29–C45, C44–C98, C51–C91, C60–C84, and C78–C89. Residues Y28, G30, and G32 each coordinate Ca(2+). H48 is an active-site residue. D49 is a binding site for Ca(2+). D92 is an active-site residue.

The protein belongs to the phospholipase A2 family. Group I subfamily. D49 sub-subfamily. The cofactor is Ca(2+). In terms of tissue distribution, expressed by the venom gland.

The protein resides in the secreted. The catalysed reaction is a 1,2-diacyl-sn-glycero-3-phosphocholine + H2O = a 1-acyl-sn-glycero-3-phosphocholine + a fatty acid + H(+). PLA2 catalyzes the calcium-dependent hydrolysis of the 2-acyl groups in 3-sn-phosphoglycerides. This Pseudechis australis (Mulga snake) protein is Basic phospholipase A2 PA-15.